Reading from the N-terminus, the 557-residue chain is Membrane protein insertase YidC (557 aa).

Transmembrane regions (helical) follow at residues tryptophan 371–alanine 391, leucine 437–leucine 457, and proline 515–valine 535.

This sequence belongs to the OXA1/ALB3/YidC family. Type 1 subfamily. As to quaternary structure, interacts with the Sec translocase complex via SecD. Specifically interacts with transmembrane segments of nascent integral membrane proteins during membrane integration.

The protein resides in the cell inner membrane. Functionally, required for the insertion and/or proper folding and/or complex formation of integral membrane proteins into the membrane. Involved in integration of membrane proteins that insert both dependently and independently of the Sec translocase complex, as well as at least some lipoproteins. Aids folding of multispanning membrane proteins. In Polynucleobacter necessarius subsp. necessarius (strain STIR1), this protein is Membrane protein insertase YidC.